The following is a 552-amino-acid chain: Steroid transmembrane transporter SLC22A24 (552 aa).

12 consecutive transmembrane segments (helical) span residues 16–36, 146–166, 178–200, 204–226, 234–254, 260–280, 350–370, 380–400, 407–427, 435–455, 474–492, and 496–516; these read FQIC…PNIV, SMVQ…YGHL, LCFL…LVYC, FLAG…EWTL, IMVL…LAFA, ILQL…WKMV, VFGL…LILN, LFQI…LLTL, ISQI…TFLP, VVLA…ASVH, VSGR…LMAY, and LPWI…LLLP.

Belongs to the major facilitator (TC 2.A.1) superfamily. Organic cation transporter (TC 2.A.1.19) family. As to expression, localized to the kidney. Highly specific expression pattern in the nephron, localized to segment 3 of the proximal tubule.

The protein resides in the cell membrane. The enzyme catalyses estrone 3-sulfate(out) + glutarate(in) = estrone 3-sulfate(in) + glutarate(out). It carries out the reaction 17beta-estradiol 17-O-(beta-D-glucuronate)(out) + glutarate(in) = 17beta-estradiol 17-O-(beta-D-glucuronate)(in) + glutarate(out). It catalyses the reaction taurocholate(out) + glutarate(in) = taurocholate(in) + glutarate(out). The catalysed reaction is 5alpha-androstane-3alpha,17beta-diol 3-O-(beta-D-glucuronate)(out) + glutarate(in) = 5alpha-androstane-3alpha,17beta-diol 3-O-(beta-D-glucuronate)(in) + glutarate(out). The enzyme catalyses glycocholate(out) + glutarate(in) = glycocholate(in) + glutarate(out). It carries out the reaction dehydroepiandrosterone 3-sulfate(out) + glutarate(in) = dehydroepiandrosterone 3-sulfate(in) + glutarate(out). It catalyses the reaction glutarate(in) + succinate(out) = glutarate(out) + succinate(in). Its activity is regulated as follows. Transport is chloride sensitive and transtimulated by glutaric acid. Transport is inhibited by anionic compounds from different chemical classes. Renal transmembrane organic anion/dicarboxylate exchanger that participates in the reabsorption of conjugated steroids including estradiol-17beta-D-glucuronide (or 17beta-estradiol 17-O-(beta-D-glucuronate)), androstanediol glucuronide (or 5alpha-androstane-3alpha,17beta-diol 3-O-(beta-D-glucuronate)), and estrone 3-sulfate, as well as bile acids taurocholate and glycocholate, driven by an outward gradient of dicarboxylates such as glutarate or succinate. Its function is as follows. Similar uptake function as Isoform 1. Functionally, lack of transporter activity. This chain is Steroid transmembrane transporter SLC22A24, found in Homo sapiens (Human).